A 116-amino-acid polypeptide reads, in one-letter code: Immunoglobulin heavy variable 2-4 (116 aa).

The first 19 residues, 1-19, serve as a signal peptide directing secretion; it reads MAVLVLLFCLVTFPSCVLS. Positions 20–116 constitute an Ig-like domain; it reads QVQLKQSGPG…DDTAIYYCAK (97 aa). The cysteines at positions 41 and 114 are disulfide-linked.

The sequence is that of Immunoglobulin heavy variable 2-4 from Mus musculus (Mouse).